A 236-amino-acid polypeptide reads, in one-letter code: Rab-like protein 3 (236 aa).

Residues 1 to 236 are small GTPase-like; the sequence is MASLDRVKVL…GGTLKSLHYD (236 aa). GTP is bound by residues 16–21, 148–150, and 179–180; these read GVGKSS, KLD, and DC.

It belongs to the small GTPase superfamily. Rab family. Homodimer. Interacts with GPR89; the interaction stabilizes GPR89. Interacts with RAP1GDS1.

Its function is as follows. Required for KRAS signaling regulation and modulation of cell proliferation. Regulator of KRAS prenylation, and probably prenylation of other small GTPases. Required for lymphocyte development and function. Not required for myeloid cell development. The chain is Rab-like protein 3 (RABL3) from Bos taurus (Bovine).